Consider the following 154-residue polypeptide: Transcriptional repressor NrdR (154 aa).

A zinc finger spans residues 3–34; it reads CPTCQYNGTRVVDSRPADDGNSIRRRRECEKC. The ATP-cone domain occupies 49–139; sequence LIVVKKDGAR…VYRQFKDISV (91 aa).

This sequence belongs to the NrdR family. Zn(2+) is required as a cofactor.

In terms of biological role, negatively regulates transcription of bacterial ribonucleotide reductase nrd genes and operons by binding to NrdR-boxes. This Listeria monocytogenes serotype 4a (strain HCC23) protein is Transcriptional repressor NrdR.